The sequence spans 452 residues: SAGA complex/transcription factor TFIID complex subunit Taf6 (452 aa).

The region spanning T4–R68 is the Histone-fold domain.

The protein belongs to the TAF6 family. In terms of assembly, component of the 1.8 MDa SAGA (Spt-Ada-Gcn5 acetyltransferase) complex, which is composed of 19 subunits tra1, spt7, taf5, ngg1/ada3, sgf73, spt20, spt8, taf12, taf6, hfi1/ada1, ubp8, gcn5, ada2, spt3, sgf29, taf10, taf9, sgf11 and sus1. The SAGA complex is composed of 4 modules, namely the HAT (histone acetyltransferase) module (gcn5, ada2, ngg1/ada3 and sgf29), the DUB (deubiquitinating) module (ubp8, sgf11, sgf73 and sus1), the core or TAF (TBP-associated factor) module (taf5, taf6, taf9, taf10 and taf12), and the Tra1 or SPT (Suppressor of Ty) module (tra1, hfi1/ada1, spt3, spt7, spt8 and spt20). The Tra1/SPT module binds activators, the core module recruits TBP (TATA-binding protein), the HAT module contains the histone H3 acetyltransferase gcn5, and the DUB module comprises the histone H2B deubiquitinase ubp8. Interacts with gcn5, taf5 and taf73. Component of the 1.2 MDa TFIID complex, which is composed of TATA-binding protein (TBP) and the 14 TBP-associated factors (TAFs). It comprises 1 copy of each taf1, taf2, taf3, taf7, taf8, taf11, taf13, 2 copies of each taf4, taf5, taf6, taf9, taf10, taf12, and 3 copies of taf14. In TFIID, taf6 heterodimerizes with taf9, forming ultimately an octamer consisting of a taf6-taf9 heterotetramer core flanked by taf4-taf12 dimers on either side, similar to the histone H2A-H2B-H3-H4 octamer.

The protein resides in the nucleus. Functions as a component of both the DNA-binding general transcription initiation factor complex TFIID and the transcription coactivator SAGA complex. Binding of TFIID to a promoter (with or without TATA element) is the initial step in pre-initiation complex (PIC) formation. TFIID plays a key role in the regulation of gene expression by RNA polymerase II through different activities such as transcription activator interaction, core promoter recognition and selectivity, TFIIA and TFIIB interaction, chromatin modification (histone acetylation by TAF1), facilitation of DNA opening and initiation of transcription. SAGA acts as a general cofactor required for essentially all RNA polymerase II transcription. At the promoters, SAGA is required for transcription pre-initiation complex (PIC) recruitment. It influences RNA polymerase II transcriptional activity through different activities such as TBP interaction (via core/TAF module) and promoter selectivity, interaction with transcription activators (via Tra1/SPT module), and chromatin modification through histone acetylation (via HAT module) and deubiquitination (via DUB module). SAGA preferentially acetylates histones H3 (to form H3K9ac, H3K14ac, H3K18ac and H3K23ac) and H2B and deubiquitinates histone H2B. SAGA interacts with DNA via upstream activating sequences (UASs). This Schizosaccharomyces pombe (strain 972 / ATCC 24843) (Fission yeast) protein is SAGA complex/transcription factor TFIID complex subunit Taf6.